The following is a 122-amino-acid chain: Large ribosomal subunit protein uL18 (122 aa).

The protein belongs to the universal ribosomal protein uL18 family. As to quaternary structure, part of the 50S ribosomal subunit; part of the 5S rRNA/L5/L18/L25 subcomplex. Contacts the 5S and 23S rRNAs.

Its function is as follows. This is one of the proteins that bind and probably mediate the attachment of the 5S RNA into the large ribosomal subunit, where it forms part of the central protuberance. This is Large ribosomal subunit protein uL18 from Mycobacterium ulcerans (strain Agy99).